Here is a 640-residue protein sequence, read N- to C-terminus: 1-deoxy-D-xylulose-5-phosphate synthase (640 aa).

Residues histidine 79 and 120–122 (GHS) contribute to the thiamine diphosphate site. Residue aspartate 151 coordinates Mg(2+). Thiamine diphosphate contacts are provided by residues 152-153 (GS), asparagine 180, tyrosine 290, and glutamate 372. Asparagine 180 contacts Mg(2+).

Belongs to the transketolase family. DXPS subfamily. Homodimer. The cofactor is Mg(2+). Thiamine diphosphate is required as a cofactor.

It carries out the reaction D-glyceraldehyde 3-phosphate + pyruvate + H(+) = 1-deoxy-D-xylulose 5-phosphate + CO2. It participates in metabolic intermediate biosynthesis; 1-deoxy-D-xylulose 5-phosphate biosynthesis; 1-deoxy-D-xylulose 5-phosphate from D-glyceraldehyde 3-phosphate and pyruvate: step 1/1. Functionally, catalyzes the acyloin condensation reaction between C atoms 2 and 3 of pyruvate and glyceraldehyde 3-phosphate to yield 1-deoxy-D-xylulose-5-phosphate (DXP). In Rhodopseudomonas palustris (strain BisA53), this protein is 1-deoxy-D-xylulose-5-phosphate synthase.